We begin with the raw amino-acid sequence, 76 residues long: Omega-conotoxin-like TeA61 (76 aa).

The signal sequence occupies residues 1 to 22; that stretch reads MKLTCMMIVAVLFLTAWTFATA. Residues 23-51 constitute a propeptide that is removed on maturation; the sequence is DDSSNGLGNLFLKAHHEMKNPEASKLNER. Cystine bridges form between cysteine 52/cysteine 67, cysteine 59/cysteine 70, and cysteine 66/cysteine 75.

This sequence belongs to the conotoxin O1 superfamily. Expressed by the venom duct.

The protein localises to the secreted. Its function is as follows. Omega-conotoxins act at presynaptic membranes, they bind and block voltage-gated calcium channels (Cav). In Conus textile (Cloth-of-gold cone), this protein is Omega-conotoxin-like TeA61.